A 185-amino-acid polypeptide reads, in one-letter code: Ribosome maturation factor RimM (185 aa).

Residues 106 to 185 (EGDYYWKDLM…SIEVDWDPGF (80 aa)) form the PRC barrel domain.

The protein belongs to the RimM family. Binds ribosomal protein uS19.

The protein resides in the cytoplasm. Functionally, an accessory protein needed during the final step in the assembly of 30S ribosomal subunit, possibly for assembly of the head region. Essential for efficient processing of 16S rRNA. May be needed both before and after RbfA during the maturation of 16S rRNA. It has affinity for free ribosomal 30S subunits but not for 70S ribosomes. This Shigella dysenteriae serotype 1 (strain Sd197) protein is Ribosome maturation factor RimM.